The chain runs to 518 residues: Mitochondrial distribution and morphology protein 34 (518 aa).

The region spanning 1–198 (MSFKVNWNTL…LPTLIHRLSL (198 aa)) is the SMP-LTD domain. 2 disordered regions span residues 335–369 (SRPK…SEMS) and 491–518 (IPDV…PYQV). Positions 336 to 350 (RPKRRVIKLGSKKSS) are enriched in basic residues. The segment covering 492 to 506 (PDVKSHPGTGRKLDT) has biased composition (basic and acidic residues).

The protein belongs to the MDM34 family. As to quaternary structure, component of the ER-mitochondria encounter structure (ERMES) or MDM complex, composed of MMM1, MDM10, MDM12 and MDM34.

It localises to the mitochondrion outer membrane. Its function is as follows. Component of the ERMES/MDM complex, which serves as a molecular tether to connect the endoplasmic reticulum (ER) and mitochondria. Components of this complex are involved in the control of mitochondrial shape and protein biogenesis, and function in nonvesicular lipid trafficking between the ER and mitochondria. MDM34 is required for the interaction of the ER-resident membrane protein MMM1 and the outer mitochondrial membrane-resident beta-barrel protein MDM10. This chain is Mitochondrial distribution and morphology protein 34, found in Meyerozyma guilliermondii (strain ATCC 6260 / CBS 566 / DSM 6381 / JCM 1539 / NBRC 10279 / NRRL Y-324) (Yeast).